A 1047-amino-acid polypeptide reads, in one-letter code: MSFGQGGGGPFGGPPRDGGGTAGGQSGPFGAFGPFGGAPRGPGDDGDRGPGGPFGGGGSSAARGRGRPGRPSALVLTIIAVAVLVGLFVVFTNVYTDVLWFSQLGFTEVFWTEVLAKGALFLIAGLGMALAVWLAIRTAWRHRPADASAAARDSLSQVQRQLEPIRRLVFLGVPLVLGVFAGSTAMNGWNTVLLFLNQVPYGQADPEFGLDLMFFMATLPFLTLVVGYLISVVLVSGITGLLVHYLYGAVRVEEGGGVRITPAARAHIGITLAVFLLLQGVNFWLNRYRTTQSQTGNWAGALYTDVNAVIPTSAILAVTAVIVAGLFVWTVVSGRWRLSLIGTAVLVITALVVGTAYPFIVQEYQVKPSERTLESQYIERNIAMTREAYGLDDVEVTNYEGATDTEAGALAGEEANTANVRLMDPNLISQTFGQLQQFRPYYSFPTTLHVDRYEVDGQTRDTILAARDVNVDDSQSWVNRHTIYTHGYGMVVADASEVAAGGRPQWLLSEIPTRGPLASDQDYEPRIYFGHNSPSYSVVGAPEGAPAVERDRPQTADSQEDTAYTFSGDGGPSVGNLFNRLAYAVKFGSPELVLSSDVNEASQILYDRDPAERVRKVAPYLTVDTAPYPAIVDGRVQWIVDAYTTSDQFPYSTAQQLGEVTVDSLSQGQNPALQGRVNYIRNSVKATVDAYDGSVSLYAWDDQDPLLQAWQNVYPSSLRPYSEMSAGLLDHVRYPEDMFKVQRELLGRYHVTDADDFYENNDAWSVPSDPTREEDVKQPPYYMTLQMPGQDEPAFSLTSSYIPQITDGAQQRNVLYGFLSAAGDAGTGEDGVKAEGYGQLRLLELPRSTTVPGPGQAQANFDSNADVSRELNLLRQGASEVLNGNMITLPVAGGILYVQPVYVRSSGGTTYPTLRKVLVSFGDKVGFADTLQEALDQVFDGDSGAVTPEEKQAEAPAPGEKPTAPGTVEEELSAALEEAQDALTQGQERLAEGDWAGYGEQQKRLNEALKRATAADDALGGDAPAQEQAPAEASPAPSSSPSPTPSG.

Composition is skewed to gly residues over residues 1–27 (MSFG…GQSG) and 49–59 (GPGGPFGGGGS). Positions 1-66 (MSFGQGGGGP…GGSSAARGRG (66 aa)) are disordered. The next 7 membrane-spanning stretches (helical) occupy residues 71 to 91 (PSAL…FVVF), 114 to 134 (VLAK…AVWL), 168 to 188 (LVFL…AMNG), 214 to 234 (FFMA…SVVL), 266 to 286 (AHIG…FWLN), 314 to 334 (AILA…VVSG), and 341 to 361 (IGTA…PFIV). Disordered regions lie at residues 544 to 568 (GAPA…TFSG), 941 to 965 (GDSG…PTAP), and 1007 to 1047 (EALK…TPSG). Positions 555–565 (TADSQEDTAYT) are enriched in polar residues. Residues 1015-1037 (ADDALGGDAPAQEQAPAEASPAP) show a composition bias toward low complexity. Pro residues predominate over residues 1038 to 1047 (SSSPSPTPSG).

Belongs to the UPF0182 family.

The protein resides in the cell membrane. This chain is UPF0182 protein Mlut_14990, found in Micrococcus luteus (strain ATCC 4698 / DSM 20030 / JCM 1464 / CCM 169 / CCUG 5858 / IAM 1056 / NBRC 3333 / NCIMB 9278 / NCTC 2665 / VKM Ac-2230) (Micrococcus lysodeikticus).